The primary structure comprises 252 residues: 3-dehydroquinate dehydratase (252 aa).

Residues Ser-21, 46–48, and Arg-82 contribute to the 3-dehydroquinate site; that span reads EWR. Catalysis depends on His-143, which acts as the Proton donor/acceptor. Lys-170 acts as the Schiff-base intermediate with substrate in catalysis. Residues Arg-213, Ser-232, and Gln-236 each coordinate 3-dehydroquinate.

It belongs to the type-I 3-dehydroquinase family. In terms of assembly, homodimer.

The enzyme catalyses 3-dehydroquinate = 3-dehydroshikimate + H2O. It functions in the pathway metabolic intermediate biosynthesis; chorismate biosynthesis; chorismate from D-erythrose 4-phosphate and phosphoenolpyruvate: step 3/7. Involved in the third step of the chorismate pathway, which leads to the biosynthesis of aromatic amino acids. Catalyzes the cis-dehydration of 3-dehydroquinate (DHQ) and introduces the first double bond of the aromatic ring to yield 3-dehydroshikimate. This Escherichia coli O9:H4 (strain HS) protein is 3-dehydroquinate dehydratase.